We begin with the raw amino-acid sequence, 212 residues long: Large ribosomal subunit protein bL25 (212 aa).

Positions 190-212 (IAEAGDALAEPEVISKGSGEADE) are disordered.

This sequence belongs to the bacterial ribosomal protein bL25 family. CTC subfamily. In terms of assembly, part of the 50S ribosomal subunit; part of the 5S rRNA/L5/L18/L25 subcomplex. Contacts the 5S rRNA. Binds to the 5S rRNA independently of L5 and L18.

This is one of the proteins that binds to the 5S RNA in the ribosome where it forms part of the central protuberance. The sequence is that of Large ribosomal subunit protein bL25 from Rhodopirellula baltica (strain DSM 10527 / NCIMB 13988 / SH1).